A 98-amino-acid polypeptide reads, in one-letter code: NADH-ubiquinone oxidoreductase chain 4L (98 aa).

3 helical membrane passes run Gln2–Phe22, Phe26–Ile46, and Phe59–Val79.

Belongs to the complex I subunit 4L family. Core subunit of respiratory chain NADH dehydrogenase (Complex I) which is composed of 45 different subunits.

Its subcellular location is the mitochondrion inner membrane. It catalyses the reaction a ubiquinone + NADH + 5 H(+)(in) = a ubiquinol + NAD(+) + 4 H(+)(out). Its function is as follows. Core subunit of the mitochondrial membrane respiratory chain NADH dehydrogenase (Complex I) which catalyzes electron transfer from NADH through the respiratory chain, using ubiquinone as an electron acceptor. Part of the enzyme membrane arm which is embedded in the lipid bilayer and involved in proton translocation. This chain is NADH-ubiquinone oxidoreductase chain 4L (MT-ND4L), found in Echinosorex gymnura (Moon rat).